Consider the following 32-residue polypeptide: MTPTLTPPPETVAPPAADERCDRCNAAGKLRI.

The protein is Calichemicin antitumor antibiotic biosynthesis protein of Micromonospora echinospora (Micromonospora purpurea).